Here is a 248-residue protein sequence, read N- to C-terminus: 4-hydroxy-tetrahydrodipicolinate reductase (248 aa).

NAD(+) contacts are provided by residues D32, 74-76, and 99-102; these read GTT and SANF. H134 serves as the catalytic Proton donor/acceptor. H135 provides a ligand contact to (S)-2,3,4,5-tetrahydrodipicolinate. The active-site Proton donor is K138. 144 to 145 lines the (S)-2,3,4,5-tetrahydrodipicolinate pocket; the sequence is GT.

The protein belongs to the DapB family.

The protein localises to the cytoplasm. It catalyses the reaction (S)-2,3,4,5-tetrahydrodipicolinate + NAD(+) + H2O = (2S,4S)-4-hydroxy-2,3,4,5-tetrahydrodipicolinate + NADH + H(+). The catalysed reaction is (S)-2,3,4,5-tetrahydrodipicolinate + NADP(+) + H2O = (2S,4S)-4-hydroxy-2,3,4,5-tetrahydrodipicolinate + NADPH + H(+). Its pathway is amino-acid biosynthesis; L-lysine biosynthesis via DAP pathway; (S)-tetrahydrodipicolinate from L-aspartate: step 4/4. In terms of biological role, catalyzes the conversion of 4-hydroxy-tetrahydrodipicolinate (HTPA) to tetrahydrodipicolinate. This Pelodictyon phaeoclathratiforme (strain DSM 5477 / BU-1) protein is 4-hydroxy-tetrahydrodipicolinate reductase.